A 350-amino-acid polypeptide reads, in one-letter code: Dihydroorotate dehydrogenase (quinone) (350 aa).

FMN contacts are provided by residues 59-63 and Thr83; that span reads AGLDK. Lys63 is a binding site for substrate. 108-112 is a substrate binding site; that stretch reads NRMGF. 2 residues coordinate FMN: Asn136 and Asn169. A substrate-binding site is contributed by Asn169. Ser172 acts as the Nucleophile in catalysis. Asn174 is a substrate binding site. Lys214 and Thr242 together coordinate FMN. 243-244 serves as a coordination point for substrate; sequence NT. FMN is bound by residues Gly265, Gly294, and 315-316; that span reads YS.

The protein belongs to the dihydroorotate dehydrogenase family. Type 2 subfamily. In terms of assembly, monomer. FMN serves as cofactor.

It is found in the cell membrane. It carries out the reaction (S)-dihydroorotate + a quinone = orotate + a quinol. The protein operates within pyrimidine metabolism; UMP biosynthesis via de novo pathway; orotate from (S)-dihydroorotate (quinone route): step 1/1. In terms of biological role, catalyzes the conversion of dihydroorotate to orotate with quinone as electron acceptor. The chain is Dihydroorotate dehydrogenase (quinone) from Aromatoleum aromaticum (strain DSM 19018 / LMG 30748 / EbN1) (Azoarcus sp. (strain EbN1)).